The sequence spans 412 residues: Putative gustatory receptor 58c (412 aa).

A run of 2 helical transmembrane segments spans residues 39–59 (VVYCVILNVVYLLVLPFALFV) and 72–92 (MFGVVYNVVALTKLLTMLFLM). Asparagine 158 is a glycosylation site (N-linked (GlcNAc...) asparagine). Residues 173–193 (IVYALIMILLMSYVDMTVYMV) traverse the membrane as a helical segment. An N-linked (GlcNAc...) asparagine glycan is attached at asparagine 203. Transmembrane regions (helical) follow at residues 224-241 (IPREMGLMQILAAWRKLW), 262-282 (VLFNLLTTYIFSIAVLFRLWI), and 296-316 (ILYAIIFLTHHVEIVMQFSIF). Residues asparagine 337, asparagine 386, and asparagine 391 are each glycosylated (N-linked (GlcNAc...) asparagine).

It belongs to the insect chemoreceptor superfamily. Gustatory receptor (GR) family. Gr10a subfamily.

It localises to the cell membrane. Functionally, probable gustatory receptor which mediates acceptance or avoidance behavior, depending on its substrates. The protein is Putative gustatory receptor 58c (Gr58c) of Drosophila melanogaster (Fruit fly).